The following is a 407-amino-acid chain: MNFIITTRDFSNDDSVLRAAEMRDNVAGSISKAYKGTVRAEGKKKLLLKHLPVPPGGCSRRNSNLFVFCTERDYRKFHQGIAQLKRAPAELDPHEIQQVTASIRCRLQPSLREPPTPADELQTAVSRVCALFNQLVFTAQLRHYCEHQDKVVSYARDELTKRCGEKSALGVEVHQLVALLPHERHRELCHVLIGLLHQTPHMWARSIRLIGHLRHYLQNSFLHLLMNSGLDIAQVFDGCYHSEAYRMLFQIGHTDSVSAALELSHGAAAGPPEADENNDEGEEDDDELRHSDPAPLHESKKPRNARRPRTRVPPHEQKPEENEEEEEELFPSCKATAAFLRAEPSVSNDDGNGGERCDTLATALRHRADEEDGPLASQTAVRVAATPSPSVTPALTPVTSPITPLCI.

Disordered regions lie at residues 267 to 330 and 388 to 407; these read AAAG…EELF and SPSVTPALTPVTSPITPLCI. The span at 273 to 286 shows a compositional bias: acidic residues; it reads EADENNDEGEEDDD. Basic and acidic residues predominate over residues 287–301; the sequence is ELRHSDPAPLHESKK. A compositionally biased stretch (basic residues) spans 302 to 312; the sequence is PRNARRPRTRV.

Belongs to the HHV-5 UL34 protein family.

The protein resides in the host nucleus. Acts as a transcriptional repressor of the US3 gene expression through a specific DNA sequence named the transcriptional repressive element (tre). The chain is Transcriptional regulator UL34 (UL34) from Human cytomegalovirus (strain AD169) (HHV-5).